We begin with the raw amino-acid sequence, 456 residues long: Glycosyl hydrolase family 109 protein (456 aa).

The segment at residues 1-31 (MKLNRRHFLKTAGLSAAGILTSQLPLSSAEA) is a signal peptide (tat-type signal). Residues 62–63 (QR), Asp84, 133–136 (WEWH), 153–154 (EV), and Asn182 each bind NAD(+). Substrate-binding positions include Tyr211, Arg230, 242–245 (YPTH), and Tyr324. Tyr242 is a binding site for NAD(+).

The protein belongs to the Gfo/Idh/MocA family. Glycosyl hydrolase 109 subfamily. Requires NAD(+) as cofactor. In terms of processing, predicted to be exported by the Tat system. The position of the signal peptide cleavage has not been experimentally proven.

In terms of biological role, glycosidase. The protein is Glycosyl hydrolase family 109 protein of Shewanella pealeana (strain ATCC 700345 / ANG-SQ1).